We begin with the raw amino-acid sequence, 678 residues long: UvrABC system protein B (678 aa).

The 387-residue stretch at 31–417 (EGLENGLAHQ…KSGGEIIDQV (387 aa)) folds into the Helicase ATP-binding domain. Position 44–51 (44–51 (GVTGSGKT)) interacts with ATP. Positions 97–120 (YYDYYQPEAYVPSSDTFIEKDASI) match the Beta-hairpin motif. The Helicase C-terminal domain occupies 436 to 589 (QVDDLLSEAR…QMKYNEARGI (154 aa)). A UVR domain is found at 638 to 673 (QQQIKKLEQQMYKYAQDLEFEKAAAVRDQLQQLREH).

This sequence belongs to the UvrB family. As to quaternary structure, forms a heterotetramer with UvrA during the search for lesions. Interacts with UvrC in an incision complex.

It is found in the cytoplasm. In terms of biological role, the UvrABC repair system catalyzes the recognition and processing of DNA lesions. A damage recognition complex composed of 2 UvrA and 2 UvrB subunits scans DNA for abnormalities. Upon binding of the UvrA(2)B(2) complex to a putative damaged site, the DNA wraps around one UvrB monomer. DNA wrap is dependent on ATP binding by UvrB and probably causes local melting of the DNA helix, facilitating insertion of UvrB beta-hairpin between the DNA strands. Then UvrB probes one DNA strand for the presence of a lesion. If a lesion is found the UvrA subunits dissociate and the UvrB-DNA preincision complex is formed. This complex is subsequently bound by UvrC and the second UvrB is released. If no lesion is found, the DNA wraps around the other UvrB subunit that will check the other stand for damage. The polypeptide is UvrABC system protein B (Pasteurella multocida (strain Pm70)).